The sequence spans 516 residues: mRNA export factor ICP27 homolog (516 aa).

The Zn(2+) site is built by Cys231, His336, Cys338, and Cys343. The segment at 231-343 adopts a CHC2-type zinc-finger fold; sequence CVFNDNGHGD…SNHKCDDVSC (113 aa). Polar residues predominate over residues 399–409; the sequence is YSTSRDLPQTS. The segment at 399–423 is disordered; it reads YSTSRDLPQTSHRSHKNQGTPKVKS.

It belongs to the HHV-1 ICP27 protein family.

Its subcellular location is the virion tegument. It is found in the virion. It localises to the host nucleus. The protein localises to the host cytoplasm. Immediate early (EI) protein that plays many roles during productive infection including regulation of viral gene expression and nuclear export of intronless viral RNAs. This chain is mRNA export factor ICP27 homolog, found in Homo sapiens (Human).